The chain runs to 249 residues: Phosphate import ATP-binding protein PstB 2 (249 aa).

An ABC transporter domain is found at 4–244 (FDIENLDLYY…PSDDRTRGYV (241 aa)). An ATP-binding site is contributed by 36–43 (GPSGCGKS).

It belongs to the ABC transporter superfamily. Phosphate importer (TC 3.A.1.7) family. As to quaternary structure, the complex is composed of two ATP-binding proteins (PstB), two transmembrane proteins (PstC and PstA) and a solute-binding protein (PstS).

It localises to the cell inner membrane. It catalyses the reaction phosphate(out) + ATP + H2O = ADP + 2 phosphate(in) + H(+). Part of the ABC transporter complex PstSACB involved in phosphate import. Responsible for energy coupling to the transport system. The protein is Phosphate import ATP-binding protein PstB 2 of Vibrio vulnificus (strain CMCP6).